The primary structure comprises 379 residues: Sensor histidine kinase YhcY (379 aa).

The Histidine kinase domain maps to 185–373 (RLAQELHDSV…KLSIRLPLKS (189 aa)). H191 is modified (phosphohistidine; by autocatalysis).

It carries out the reaction ATP + protein L-histidine = ADP + protein N-phospho-L-histidine.. Member of the two-component regulatory system YhcY/YhcZ. Probably activates YhcZ by phosphorylation. The polypeptide is Sensor histidine kinase YhcY (yhcY) (Bacillus subtilis (strain 168)).